The following is a 316-amino-acid chain: Ornithine carbamoyltransferase (316 aa).

Carbamoyl phosphate contacts are provided by residues 57–60, glutamine 84, arginine 108, and 135–138; these read STRT and HPCQ. L-ornithine is bound by residues asparagine 166, aspartate 230, and 234 to 235; that span reads SM. Carbamoyl phosphate contacts are provided by residues 269–270 and arginine 297; that span reads CL.

The protein belongs to the aspartate/ornithine carbamoyltransferase superfamily. OTCase family.

It is found in the cytoplasm. It carries out the reaction carbamoyl phosphate + L-ornithine = L-citrulline + phosphate + H(+). It functions in the pathway amino-acid degradation; L-arginine degradation via ADI pathway; carbamoyl phosphate from L-arginine: step 2/2. Its function is as follows. Reversibly catalyzes the transfer of the carbamoyl group from carbamoyl phosphate (CP) to the N(epsilon) atom of ornithine (ORN) to produce L-citrulline. The chain is Ornithine carbamoyltransferase from Bacillus cereus (strain 03BB102).